The chain runs to 478 residues: Methylenetetrahydrofolate--tRNA-(uracil-5-)-methyltransferase TrmFO (478 aa).

16–21 (GAGLAG) contributes to the FAD binding site. The tract at residues 429-448 (PLANPPTKGPDGKRLRGPEK) is disordered. Positions 438–448 (PDGKRLRGPEK) are enriched in basic and acidic residues.

Belongs to the MnmG family. TrmFO subfamily. FAD is required as a cofactor.

The protein resides in the cytoplasm. It carries out the reaction uridine(54) in tRNA + (6R)-5,10-methylene-5,6,7,8-tetrahydrofolate + NADH + H(+) = 5-methyluridine(54) in tRNA + (6S)-5,6,7,8-tetrahydrofolate + NAD(+). The catalysed reaction is uridine(54) in tRNA + (6R)-5,10-methylene-5,6,7,8-tetrahydrofolate + NADPH + H(+) = 5-methyluridine(54) in tRNA + (6S)-5,6,7,8-tetrahydrofolate + NADP(+). Catalyzes the folate-dependent formation of 5-methyl-uridine at position 54 (M-5-U54) in all tRNAs. This chain is Methylenetetrahydrofolate--tRNA-(uracil-5-)-methyltransferase TrmFO, found in Rhodopseudomonas palustris (strain ATCC BAA-98 / CGA009).